The chain runs to 433 residues: Probable mannose-6-phosphate isomerase (433 aa).

Positions 103, 105, 130, and 277 each coordinate Zn(2+). Residue arginine 296 is part of the active site.

The protein belongs to the mannose-6-phosphate isomerase type 1 family. Zn(2+) is required as a cofactor.

The protein localises to the cytoplasm. It carries out the reaction D-mannose 6-phosphate = D-fructose 6-phosphate. Its pathway is nucleotide-sugar biosynthesis; GDP-alpha-D-mannose biosynthesis; alpha-D-mannose 1-phosphate from D-fructose 6-phosphate: step 1/2. Its function is as follows. Involved in the synthesis of the GDP-mannose and dolichol-phosphate-mannose required for a number of critical mannosyl transfer reactions. This Echinococcus multilocularis (Fox tapeworm) protein is Probable mannose-6-phosphate isomerase (PMIH).